The sequence spans 112 residues: T cell receptor alpha variable 2 (112 aa).

Positions 1–25 (MALQSTLGAVWLGLLLNSLWKVAES) are cleaved as a signal peptide. Residues 26 to 112 (KDQVFQPSTV…DAAVYYCAVE (87 aa)) form the Ig-like domain. Cysteine 47 and cysteine 109 form a disulfide bridge. Asparagine 48 and asparagine 84 each carry an N-linked (GlcNAc...) asparagine glycan.

As to quaternary structure, alpha-beta TR is a heterodimer composed of an alpha and beta chain; disulfide-linked. The alpha-beta TR is associated with the transmembrane signaling CD3 coreceptor proteins to form the TR-CD3 (TcR or TCR). The assembly of alpha-beta TR heterodimers with CD3 occurs in the endoplasmic reticulum where a single alpha-beta TR heterodimer associates with one CD3D-CD3E heterodimer, one CD3G-CD3E heterodimer and one CD247 homodimer forming a stable octameric structure. CD3D-CD3E and CD3G-CD3E heterodimers preferentially associate with TR alpha and TR beta chains, respectively. The association of the CD247 homodimer is the last step of TcR assembly in the endoplasmic reticulum and is required for transport to the cell surface.

It localises to the cell membrane. V region of the variable domain of T cell receptor (TR) alpha chain that participates in the antigen recognition. Alpha-beta T cell receptors are antigen specific receptors which are essential to the immune response and are present on the cell surface of T lymphocytes. Recognize peptide-major histocompatibility (MH) (pMH) complexes that are displayed by antigen presenting cells (APC), a prerequisite for efficient T cell adaptive immunity against pathogens. Binding of alpha-beta TR to pMH complex initiates TR-CD3 clustering on the cell surface and intracellular activation of LCK that phosphorylates the ITAM motifs of CD3G, CD3D, CD3E and CD247 enabling the recruitment of ZAP70. In turn ZAP70 phosphorylates LAT, which recruits numerous signaling molecules to form the LAT signalosome. The LAT signalosome propagates signal branching to three major signaling pathways, the calcium, the mitogen-activated protein kinase (MAPK) kinase and the nuclear factor NF-kappa-B (NF-kB) pathways, leading to the mobilization of transcription factors that are critical for gene expression and essential for T cell growth and differentiation. The T cell repertoire is generated in the thymus, by V-(D)-J rearrangement. This repertoire is then shaped by intrathymic selection events to generate a peripheral T cell pool of self-MH restricted, non-autoaggressive T cells. Post-thymic interaction of alpha-beta TR with the pMH complexes shapes TR structural and functional avidity. The protein is T cell receptor alpha variable 2 of Homo sapiens (Human).